Reading from the N-terminus, the 323-residue chain is tRNA dimethylallyltransferase (323 aa).

12 to 19 lines the ATP pocket; sequence GPTAAGKT. 14-19 serves as a coordination point for substrate; that stretch reads TAAGKT. 2 interaction with substrate tRNA regions span residues 37 to 40 and 161 to 165; these read DSAL and QRLIR.

Belongs to the IPP transferase family. As to quaternary structure, monomer. The cofactor is Mg(2+).

It carries out the reaction adenosine(37) in tRNA + dimethylallyl diphosphate = N(6)-dimethylallyladenosine(37) in tRNA + diphosphate. Its function is as follows. Catalyzes the transfer of a dimethylallyl group onto the adenine at position 37 in tRNAs that read codons beginning with uridine, leading to the formation of N6-(dimethylallyl)adenosine (i(6)A). This is tRNA dimethylallyltransferase from Pseudomonas putida (strain ATCC 47054 / DSM 6125 / CFBP 8728 / NCIMB 11950 / KT2440).